Consider the following 516-residue polypeptide: Putative sel1-like repeat-containing protein R850 (516 aa).

Sel1-like repeat units lie at residues Ala103–Ser138 and Ser230–Asp265.

In Acanthamoeba polyphaga (Amoeba), this protein is Putative sel1-like repeat-containing protein R850.